The primary structure comprises 379 residues: uncharacterized protein (379 aa).

Disordered regions lie at residues 1-37 (MSSIQGKGTAGPSPEGIPNSREDGEMNPEGVTISGQT), 130-150 (VRYSSGRHGMDRNKSSSLSPE), and 332-379 (NPPI…RGSR).

The protein belongs to the chlamydial CPn_0499/CT_392/TC_0671 family.

This is an uncharacterized protein from Chlamydia muridarum (strain MoPn / Nigg).